We begin with the raw amino-acid sequence, 466 residues long: MAKTLYEKLFDAHVVYEAENETPLLYIDRHLVHEVTSPQAFDGLRAHGRPVRQPGKTFATMDHNVSTQTKDINACGEMARIQMQELIKNCKEFGVELYDLNHPYQGIVHVMGPEQGVTLPGMTIVCGDSHTATHGAFGALAFGIGTSEVEHVLATQTLKQGRAKTMKIEVQGKAAPGITAKDIVLAIIGKTGSAGGTGHVVEFCGEAIRDLSMEGRMTLCNMAIEMGAKAGLVAPDETTFNYVKGRLHAPKGKDFDDAVAYWKTLQTDEGATFDTVVTLQAEEISPQVTWGTNPGQVISVNDNIPDPASFADPVERASAEKALAYMGLKPGIPLTEVAIDKVFIGSCTNSRIEDLRAAAEIAKGRKVAPGVQALVVPGSGQVKAQAEAEGLDKIFIEAGFEWRLPGCSMCLAMNNDRLNPGERCASTSNRNFEGRQGRGGRTHLVSPAMAAAAAVTGHFADIRNIK.

Cys347, Cys407, and Cys410 together coordinate [4Fe-4S] cluster.

It belongs to the aconitase/IPM isomerase family. LeuC type 1 subfamily. In terms of assembly, heterodimer of LeuC and LeuD. The cofactor is [4Fe-4S] cluster.

The catalysed reaction is (2R,3S)-3-isopropylmalate = (2S)-2-isopropylmalate. Its pathway is amino-acid biosynthesis; L-leucine biosynthesis; L-leucine from 3-methyl-2-oxobutanoate: step 2/4. Its function is as follows. Catalyzes the isomerization between 2-isopropylmalate and 3-isopropylmalate, via the formation of 2-isopropylmaleate. In Shigella boydii serotype 4 (strain Sb227), this protein is 3-isopropylmalate dehydratase large subunit.